A 243-amino-acid chain; its full sequence is Transmembrane protein 174 (243 aa).

The next 2 helical transmembrane spans lie at 40-60 (LLFSGIFLGLVGITFTVMGWI) and 73-93 (LLGPILLSVGVTFILISVCKF). The tract at residues 205–229 (AGHDRPSSDADQLEGTQMGEEERVC) is disordered.

In terms of assembly, interacts with SLC34A1; regulates SLC34A1 internalization by PTH and FGF23.

It localises to the endoplasmic reticulum membrane. Its subcellular location is the apical cell membrane. In terms of biological role, regulator of plasma phosphate homeostasis. Decreases serum inorganic phosphate (Pi) uptake by regulating the sodium-phosphate cotransporter SLC34A1 trafficking by PTH and FGF23 in the kidney. This chain is Transmembrane protein 174 (Tmem174), found in Rattus norvegicus (Rat).